The primary structure comprises 267 residues: tRNA pseudouridine synthase A (267 aa).

The active-site Nucleophile is the D53. Y114 serves as a coordination point for substrate.

Belongs to the tRNA pseudouridine synthase TruA family. In terms of assembly, homodimer.

It catalyses the reaction uridine(38/39/40) in tRNA = pseudouridine(38/39/40) in tRNA. Functionally, formation of pseudouridine at positions 38, 39 and 40 in the anticodon stem and loop of transfer RNAs. The polypeptide is tRNA pseudouridine synthase A (Chlamydia trachomatis serovar A (strain ATCC VR-571B / DSM 19440 / HAR-13)).